Consider the following 208-residue polypeptide: MKNIHCINHPLIEHKLGILRAKETKPFQFRMLIDEISSFLLFEASKDFSLKEIEISTPIQKTTVKKLDEKIMICPILRAALGMLESVFKMIPDASVGFLGFVRNEETLKADFYFQKLPKDAKKRTAIVIDPMFATGGTAIEACNFLKSQGVKKIKFISILAAPQGLKKFSQMHDDVEVFVACIDEGLNEKGYIIPGLGDAGDRVFNTL.

Residues arginine 78, arginine 103, and 130-138 contribute to the 5-phospho-alpha-D-ribose 1-diphosphate site; that span reads DPMFATGGT. Residues isoleucine 193 and 198–200 each bind uracil; that span reads GDA. Aspartate 199 contributes to the 5-phospho-alpha-D-ribose 1-diphosphate binding site.

It belongs to the UPRTase family. It depends on Mg(2+) as a cofactor.

It carries out the reaction UMP + diphosphate = 5-phospho-alpha-D-ribose 1-diphosphate + uracil. It functions in the pathway pyrimidine metabolism; UMP biosynthesis via salvage pathway; UMP from uracil: step 1/1. With respect to regulation, allosterically activated by GTP. Functionally, catalyzes the conversion of uracil and 5-phospho-alpha-D-ribose 1-diphosphate (PRPP) to UMP and diphosphate. This chain is Uracil phosphoribosyltransferase, found in Campylobacter jejuni subsp. jejuni serotype O:6 (strain 81116 / NCTC 11828).